The chain runs to 616 residues: FNIP repeat-containing protein DDB_G0290639 (616 aa).

The stretch at 239–274 forms a coiled coil; the sequence is FENNNNNNNNNNNNNNNNNNNNNNNNNNNNNKKTEK. The span at 241-269 shows a compositional bias: low complexity; that stretch reads NNNNNNNNNNNNNNNNNNNNNNNNNNNNN. The tract at residues 241-270 is disordered; sequence NNNNNNNNNNNNNNNNNNNNNNNNNNNNNK. FNIP repeat units follow at residues 337 to 379, 380 to 421, 423 to 464, 466 to 508, 509 to 550, and 552 to 593; these read FEES…FNDG, FNQS…KLCN, FSQP…VFYD, FNQL…FSDG, FNQT…LIDS, and FQQP…ILDK.

This chain is FNIP repeat-containing protein DDB_G0290639, found in Dictyostelium discoideum (Social amoeba).